Here is a 595-residue protein sequence, read N- to C-terminus: Flap endonuclease 1 (595 aa).

Positions 1-106 (MGIKGLTKFI…SELEKRGEKR (106 aa)) are N-domain. Residue aspartate 34 coordinates Mg(2+). Residues arginine 47 and arginine 72 each contribute to the DNA site. Aspartate 88, glutamate 160, glutamate 162, aspartate 181, and aspartate 183 together coordinate Mg(2+). The interval 124 to 267 (EIKKQSGRTV…KTAYNLIKEY (144 aa)) is I-domain. Glutamate 160 serves as a coordination point for DNA. Residues glycine 245 and aspartate 247 each contribute to the DNA site. Aspartate 247 is a Mg(2+) binding site. An interaction with PCNA region spans residues 350–358 (TQRRLDNFF). The segment at 370–493 (NEESQIKKEV…TGDVYSFPNG (124 aa)) is disordered. Polar residues predominate over residues 392–401 (NDSSTKLNSK). Basic and acidic residues predominate over residues 406-425 (PKGEKESKTEKDDGDTHNGN). A compositionally biased stretch (acidic residues) spans 426–436 (DNEEEGGEGET). Residues 461–475 (HKSDSESGNVKKEST) show a composition bias toward basic and acidic residues.

This sequence belongs to the XPG/RAD2 endonuclease family. FEN1 subfamily. In terms of assembly, interacts with PCNA. Three molecules of FEN1 bind to one PCNA trimer with each molecule binding to one PCNA monomer. PCNA stimulates the nuclease activity without altering cleavage specificity. The cofactor is Mg(2+). In terms of processing, phosphorylated. Phosphorylation upon DNA damage induces relocalization to the nuclear plasma.

The protein resides in the nucleus. Its subcellular location is the nucleolus. It is found in the nucleoplasm. It localises to the mitochondrion. Functionally, structure-specific nuclease with 5'-flap endonuclease and 5'-3' exonuclease activities involved in DNA replication and repair. During DNA replication, cleaves the 5'-overhanging flap structure that is generated by displacement synthesis when DNA polymerase encounters the 5'-end of a downstream Okazaki fragment. It enters the flap from the 5'-end and then tracks to cleave the flap base, leaving a nick for ligation. Also involved in the long patch base excision repair (LP-BER) pathway, by cleaving within the apurinic/apyrimidinic (AP) site-terminated flap. Acts as a genome stabilization factor that prevents flaps from equilibrating into structures that lead to duplications and deletions. Also possesses 5'-3' exonuclease activity on nicked or gapped double-stranded DNA, and exhibits RNase H activity. Also involved in replication and repair of rDNA and in repairing mitochondrial DNA. The polypeptide is Flap endonuclease 1 (Plasmodium knowlesi (strain H)).